Here is a 292-residue protein sequence, read N- to C-terminus: Bifunctional protein FolD 2 (292 aa).

Residues 166–168 (GHS) and isoleucine 232 each bind NADP(+).

It belongs to the tetrahydrofolate dehydrogenase/cyclohydrolase family. Homodimer.

It carries out the reaction (6R)-5,10-methylene-5,6,7,8-tetrahydrofolate + NADP(+) = (6R)-5,10-methenyltetrahydrofolate + NADPH. The catalysed reaction is (6R)-5,10-methenyltetrahydrofolate + H2O = (6R)-10-formyltetrahydrofolate + H(+). Its pathway is one-carbon metabolism; tetrahydrofolate interconversion. Functionally, catalyzes the oxidation of 5,10-methylenetetrahydrofolate to 5,10-methenyltetrahydrofolate and then the hydrolysis of 5,10-methenyltetrahydrofolate to 10-formyltetrahydrofolate. The protein is Bifunctional protein FolD 2 of Ruegeria pomeroyi (strain ATCC 700808 / DSM 15171 / DSS-3) (Silicibacter pomeroyi).